Reading from the N-terminus, the 351-residue chain is UDP-N-acetylglucosamine--N-acetylmuramyl-(pentapeptide) pyrophosphoryl-undecaprenol N-acetylglucosamine transferase (351 aa).

UDP-N-acetyl-alpha-D-glucosamine is bound by residues 13–15 (TGG), asparagine 125, arginine 161, serine 189, isoleucine 241, 260–265 (ALTVCE), and glutamine 285.

It belongs to the glycosyltransferase 28 family. MurG subfamily.

It localises to the cell inner membrane. The catalysed reaction is di-trans,octa-cis-undecaprenyl diphospho-N-acetyl-alpha-D-muramoyl-L-alanyl-D-glutamyl-meso-2,6-diaminopimeloyl-D-alanyl-D-alanine + UDP-N-acetyl-alpha-D-glucosamine = di-trans,octa-cis-undecaprenyl diphospho-[N-acetyl-alpha-D-glucosaminyl-(1-&gt;4)]-N-acetyl-alpha-D-muramoyl-L-alanyl-D-glutamyl-meso-2,6-diaminopimeloyl-D-alanyl-D-alanine + UDP + H(+). It participates in cell wall biogenesis; peptidoglycan biosynthesis. Its function is as follows. Cell wall formation. Catalyzes the transfer of a GlcNAc subunit on undecaprenyl-pyrophosphoryl-MurNAc-pentapeptide (lipid intermediate I) to form undecaprenyl-pyrophosphoryl-MurNAc-(pentapeptide)GlcNAc (lipid intermediate II). In Haemophilus influenzae (strain 86-028NP), this protein is UDP-N-acetylglucosamine--N-acetylmuramyl-(pentapeptide) pyrophosphoryl-undecaprenol N-acetylglucosamine transferase.